The chain runs to 417 residues: Phosphoglycerate kinase 1 (417 aa).

Serine 2 is modified (N-acetylserine). Residues serine 2 and serine 4 each carry the phosphoserine modification. Residue lysine 6 is modified to N6-succinyllysine. Residue lysine 11 is modified to N6-acetyllysine. 6 residues coordinate (2R)-3-phosphoglycerate: valine 23, aspartate 24, phenylalanine 25, asparagine 26, glutamine 38, and arginine 39. The interval 38–43 is mitochondrial targeting region exposed following cis-trans isomerization by PIN1 and recognized by the TOM complex for mitochondrial translocation of the protein; sequence QRIKAA. Lysine 48 is subject to N6-acetyllysine; alternate. Lysine 48 carries the N6-succinyllysine; alternate modification. (2R)-3-phosphoglycerate is bound by residues serine 62, histidine 63, glycine 65, and arginine 66. Lysine 75 is subject to N6-acetyllysine. Residue tyrosine 76 is modified to Phosphotyrosine. Lysine 86 and lysine 91 each carry N6-acetyllysine. At lysine 97 the chain carries N6-acetyllysine; alternate. N6-(2-hydroxyisobutyryl)lysine; alternate is present on lysine 97. 2 residues coordinate (2R)-3-phosphoglycerate: leucine 122 and arginine 123. Lysine 131 is subject to N6-acetyllysine; alternate. An N6-malonyllysine; alternate modification is found at lysine 131. Lysine 146 carries the N6-acetyllysine modification. Positions 170 and 171 each coordinate (2R)-3-phosphoglycerate. Lysine 191 is subject to N6-succinyllysine. Tyrosine 196 carries the post-translational modification Phosphotyrosine. An N6-acetyllysine modification is found at lysine 199. Serine 203 carries the phosphoserine modification. Position 214 (glycine 214) interacts with ADP. Glycine 214 serves as a coordination point for CDP. 2 residues coordinate AMP: alanine 215 and lysine 216. Position 215 (alanine 215) interacts with ATP. Alanine 215 lines the Mg(2+) pocket. At lysine 216 the chain carries N6-(2-hydroxyisobutyryl)lysine. The Mg(2+) site is built by alanine 218 and aspartate 219. Aspartate 219 is a CDP binding site. Lysine 220 lines the AMP pocket. Lysine 220 is an ATP binding site. Position 220 is an N6-(2-hydroxyisobutyryl)lysine (lysine 220). Glycine 238 contributes to the ADP binding site. Glycine 238 serves as a coordination point for CDP. Residue glycine 239 coordinates AMP. Glycine 239 lines the ATP pocket. N6-acetyllysine is present on residues lysine 267 and lysine 291. AMP is bound at residue glycine 313. Glycine 313 contacts ATP. Lysine 323 carries the N6-(2-hydroxyisobutyryl)lysine modification. Residues glycine 338, valine 340, and phenylalanine 343 each coordinate CDP. Phenylalanine 343 provides a ligand contact to ADP. Glutamate 344 is an AMP binding site. Glutamate 344 provides a ligand contact to ATP. Lysine 361 is modified (N6-acetyllysine). Aspartate 375 and threonine 376 together coordinate ATP. Residue aspartate 375 coordinates Mg(2+).

The protein belongs to the phosphoglycerate kinase family. In terms of assembly, monomer. Interacts with kinase MAPK1/ERK2; the interaction is direct, occurs under hypoxic conditions, and promotes its interaction with PIN1. Interacts with peptidyl-prolyl cis-trans isomerase PIN1; the interaction is direct, occurs under hypoxic conditions, and targets the protein to the mitochondrion by promoting interactions with the TOM complex. Interacts with mitochondrial circRNA mcPGK1 (via its 2nd stem-loop); the interaction is direct and targets the protein to the mitochondrion by promoting interactions with the TOM complex. Interacts with pyruvate dehydrogenase kinase PDK1; the interaction is direct, occurs under hypoxic conditions and leads to PDK1-mediated inhibition of pyruvate dehydrogenase complex activity. Requires Mg(2+) as cofactor. Post-translationally, phosphorylated at Ser-203 by MAPK1/ERK2 under hypoxic conditions, which promotes its mitochondrial targeting.

It is found in the cytoplasm. It localises to the cytosol. The protein localises to the mitochondrion matrix. The enzyme catalyses (2R)-3-phosphoglycerate + ATP = (2R)-3-phospho-glyceroyl phosphate + ADP. The catalysed reaction is L-seryl-[protein] + ATP = O-phospho-L-seryl-[protein] + ADP + H(+). The protein operates within carbohydrate degradation; glycolysis; pyruvate from D-glyceraldehyde 3-phosphate: step 2/5. Its function is as follows. Catalyzes one of the two ATP producing reactions in the glycolytic pathway via the reversible conversion of 1,3-diphosphoglycerate to 3-phosphoglycerate. Both L- and D- forms of purine and pyrimidine nucleotides can be used as substrates, but the activity is much lower on pyrimidines. In addition to its role as a glycolytic enzyme, it seems that PGK-1 acts as a polymerase alpha cofactor protein (primer recognition protein). Acts as a protein kinase when localized to the mitochondrion where it phosphorylates pyruvate dehydrogenase kinase PDK1 to inhibit pyruvate dehydrogenase complex activity and suppress the formation of acetyl-coenzyme A from pyruvate, and consequently inhibit oxidative phosphorylation and promote glycolysis. May play a role in sperm motility. In Cricetulus griseus (Chinese hamster), this protein is Phosphoglycerate kinase 1 (PGK1).